The chain runs to 393 residues: S-adenosylmethionine synthase (393 aa).

His16 is an ATP binding site. Asp18 lines the Mg(2+) pocket. Position 44 (Glu44) interacts with K(+). L-methionine-binding residues include Glu57 and Gln100. The tract at residues Gln100–Gly110 is flexible loop. Residues Asp165 to Lys167, Arg231 to Phe232, Asp240, Arg246 to Lys247, and Lys267 each bind ATP. Asp240 is a binding site for L-methionine. Lys271 contacts L-methionine.

This sequence belongs to the AdoMet synthase family. In terms of assembly, homotetramer; dimer of dimers. Mg(2+) serves as cofactor. It depends on K(+) as a cofactor.

The protein localises to the cytoplasm. The enzyme catalyses L-methionine + ATP + H2O = S-adenosyl-L-methionine + phosphate + diphosphate. It participates in amino-acid biosynthesis; S-adenosyl-L-methionine biosynthesis; S-adenosyl-L-methionine from L-methionine: step 1/1. Catalyzes the formation of S-adenosylmethionine (AdoMet) from methionine and ATP. The overall synthetic reaction is composed of two sequential steps, AdoMet formation and the subsequent tripolyphosphate hydrolysis which occurs prior to release of AdoMet from the enzyme. This chain is S-adenosylmethionine synthase, found in Coxiella burnetii (strain Dugway 5J108-111).